The following is a 419-amino-acid chain: eIF5-mimic protein 1 (419 aa).

The tract at residues 1–22 (MNKHQKPVLTGQRFKTRKRDEK) is disordered. At Lys-117 the chain carries N6-acetyllysine. Residues 248-415 (VQQSLGTRKE…QNAEEESESE (168 aa)) form the W2 domain. Residues Ser-412 and Ser-414 each carry the phosphoserine modification.

This sequence belongs to the BZW family. As to quaternary structure, interacts with EIF3E, EIF2S2 and EIF3C.

It is found in the cytoplasm. Translation initiation regulator which represses non-AUG initiated translation and repeat-associated non-AUG (RAN) initiated translation by acting as a competitive inhibitor of eukaryotic translation initiation factor 5 (EIF5) function. Increases the accuracy of translation initiation by impeding EIF5-dependent translation from non-AUG codons by competing with it for interaction with EIF2S2 within the 43S pre-initiation complex (PIC) in an EIF3C-binding dependent manner. The chain is eIF5-mimic protein 1 (BZW2) from Macaca fascicularis (Crab-eating macaque).